The primary structure comprises 186 residues: Large ribosomal subunit protein uL5 (186 aa).

The protein belongs to the universal ribosomal protein uL5 family. Part of the 50S ribosomal subunit; part of the 5S rRNA/L5/L18/L25 subcomplex. Contacts the 5S rRNA and the P site tRNA. Forms a bridge to the 30S subunit in the 70S ribosome.

In terms of biological role, this is one of the proteins that bind and probably mediate the attachment of the 5S RNA into the large ribosomal subunit, where it forms part of the central protuberance. In the 70S ribosome it contacts protein S13 of the 30S subunit (bridge B1b), connecting the 2 subunits; this bridge is implicated in subunit movement. Contacts the P site tRNA; the 5S rRNA and some of its associated proteins might help stabilize positioning of ribosome-bound tRNAs. The polypeptide is Large ribosomal subunit protein uL5 (Legionella pneumophila subsp. pneumophila (strain Philadelphia 1 / ATCC 33152 / DSM 7513)).